The primary structure comprises 310 residues: Apolipoprotein E (310 aa).

Residues M1–S18 form the signal peptide. 8 consecutive repeat copies span residues V72–G93, P94–G115, A116–G137, Q138–M159, R160–E181, R182–A203, N204–R225, and G226–E247. The segment at V72–E247 is 8 X 22 AA approximate tandem repeats. M135 carries the post-translational modification Methionine sulfoxide. The segment at H150 to R160 is LDL and other lipoprotein receptors binding. Residues H150–R160 are LDL receptor binding. M154 to R157 is a binding site for heparin. Residues T202 to M282 form a lipid-binding and lipoprotein association region. A heparin-binding site is contributed by G221 to L228. Residues Q258–Q310 are homooligomerization. A specificity for association with VLDL region spans residues R270 to M282.

It belongs to the apolipoprotein A1/A4/E family. Homotetramer. May interact with ABCA1; functionally associated with ABCA1 in the biogenesis of HDLs. May interact with APP/A4 amyloid-beta peptide; the interaction is extremely stable in vitro but its physiological significance is unclear. May interact with MAPT. May interact with MAP2. In the cerebrospinal fluid, interacts with secreted SORL1. Interacts with PMEL; this allows the loading of PMEL luminal fragment on ILVs to induce fibril nucleation. Post-translationally, APOE exists as multiple glycosylated and sialylated glycoforms within cells and in plasma. The extent of glycosylation and sialylation are tissue and context specific. Glycated in plasma VLDL. In terms of processing, phosphorylated by FAM20C in the extracellular medium.

It is found in the secreted. The protein localises to the extracellular space. Its subcellular location is the extracellular matrix. The protein resides in the extracellular vesicle. It localises to the endosome. It is found in the multivesicular body. Its function is as follows. APOE is an apolipoprotein, a protein associating with lipid particles, that mainly functions in lipoprotein-mediated lipid transport between organs via the plasma and interstitial fluids. APOE is a core component of plasma lipoproteins and is involved in their production, conversion and clearance. Apolipoproteins are amphipathic molecules that interact both with lipids of the lipoprotein particle core and the aqueous environment of the plasma. As such, APOE associates with chylomicrons, chylomicron remnants, very low density lipoproteins (VLDL) and intermediate density lipoproteins (IDL) but shows a preferential binding to high-density lipoproteins (HDL). It also binds a wide range of cellular receptors including the LDL receptor/LDLR, the LDL receptor-related proteins LRP1, LRP2 and LRP8 and the very low-density lipoprotein receptor/VLDLR that mediate the cellular uptake of the APOE-containing lipoprotein particles. Finally, APOE also has a heparin-binding activity and binds heparan-sulfate proteoglycans on the surface of cells, a property that supports the capture and the receptor-mediated uptake of APOE-containing lipoproteins by cells. A main function of APOE is to mediate lipoprotein clearance through the uptake of chylomicrons, VLDLs, and HDLs by hepatocytes. APOE is also involved in the biosynthesis by the liver of VLDLs as well as their uptake by peripheral tissues ensuring the delivery of triglycerides and energy storage in muscle, heart and adipose tissues. By participating in the lipoprotein-mediated distribution of lipids among tissues, APOE plays a critical role in plasma and tissues lipid homeostasis. APOE is also involved in two steps of reverse cholesterol transport, the HDLs-mediated transport of cholesterol from peripheral tissues to the liver, and thereby plays an important role in cholesterol homeostasis. First, it is functionally associated with ABCA1 in the biogenesis of HDLs in tissues. Second, it is enriched in circulating HDLs and mediates their uptake by hepatocytes. APOE also plays an important role in lipid transport in the central nervous system, regulating neuron survival and sprouting. The polypeptide is Apolipoprotein E (Apoe) (Grammomys surdaster (African woodland thicket rat)).